The sequence spans 367 residues: Inhibin alpha chain (367 aa).

Residues 1 to 20 (MVPPLPLLLLLLLVPQGGHG) form the signal peptide. A propeptide spanning residues 21–63 (CQGSELDREIVLAKVRALFLDALGPPAVTGEGGDPGVRRLPRR) is cleaved from the precursor. Residues 64 to 233 (HALGGFARRG…PPSGGERTRR (170 aa)) constitute a propeptide, inhibin alpha N-terminal region. N-linked (GlcNAc...) asparagine glycans are attached at residues Asn-147 and Asn-269. 3 disulfide bridges follow: Cys-263–Cys-329, Cys-292–Cys-364, and Cys-296–Cys-366.

The protein belongs to the TGF-beta family. As to quaternary structure, dimeric, linked by one or more disulfide bonds. Activin B is a dimer of alpha and beta-B. Inhibin A is a dimer of alpha and beta-A. Inhibin B is a dimer of alpha and beta-B. Interacts with TGFBR3L; this interaction regulates female fertility. In terms of processing, proteolytic processing yields a number of bioactive forms, consisting either solely of the mature alpha chain, of the most N-terminal propeptide linked through a disulfide bond to the mature alpha chain, or of the entire proprotein.

The protein resides in the secreted. Its function is as follows. Inhibins and activins inhibit and activate, respectively, the secretion of follitropin by the pituitary gland. Inhibins/activins are involved in regulating a number of diverse functions such as hypothalamic and pituitary hormone secretion, gonadal hormone secretion, germ cell development and maturation, erythroid differentiation, insulin secretion, nerve cell survival, embryonic axial development or bone growth, depending on their subunit composition. Inhibins appear to oppose the functions of activins. Inhibin A is a dimer of alpha/INHA and beta-A/INHBA that functions as a feedback regulator in the hypothalamic-pituitary-gonadal (HPG) axis. Inhibits the secretion of FSH from the anterior pituitary gland by acting on pituitary gonadotrope cells. Antagonizes activin A by binding to the proteoglycan, betaglycan, and forming a stable complex with and, thereby, sequestering type II activin receptors while excluding type I receptor. In terms of biological role, inhibin B is a dimer of alpha and beta-B that plays a crucial role in the regulation of the reproductive system by inhibiting the secretion of follicle-stimulating hormone (FSH) from the anterior pituitary gland. Thereby, maintains reproductive homeostasis in both males and females. Acts as a more potent suppressor of FSH release than inhibin A. Functions as competitive receptor antagonist binding activin type II receptors with high affinity in the presence of the TGF-beta type III coreceptor/TGFBR3L. The protein is Inhibin alpha chain (INHA) of Equus caballus (Horse).